We begin with the raw amino-acid sequence, 298 residues long: Tyrosine recombinase XerD (298 aa).

The 86-residue stretch at 2–87 (KQDLARIEQF…AVRRLFQYLY (86 aa)) folds into the Core-binding (CB) domain. Residues 108-292 (RLPKDLSEAQ…ATERLRQLHQ (185 aa)) form the Tyr recombinase domain. Catalysis depends on residues Arg-148, Lys-172, His-244, Arg-247, and His-270. Tyr-279 functions as the O-(3'-phospho-DNA)-tyrosine intermediate in the catalytic mechanism.

Belongs to the 'phage' integrase family. XerD subfamily. In terms of assembly, forms a cyclic heterotetrameric complex composed of two molecules of XerC and two molecules of XerD, in which XerC interacts with XerD via its C-terminal region, XerD interacts with XerC via its C-terminal region and so on.

The protein resides in the cytoplasm. Its activity is regulated as follows. FtsK may regulate the catalytic switch between XerC and XerD in the heterotetrameric complex during the two steps of the recombination process. In terms of biological role, site-specific tyrosine recombinase, which acts by catalyzing the cutting and rejoining of the recombining DNA molecules. Binds cooperatively to specific DNA consensus sequences that are separated from XerC binding sites by a short central region, forming the heterotetrameric XerC-XerD complex that recombines DNA substrates. The complex is essential to convert dimers of the bacterial chromosome into monomers to permit their segregation at cell division. It also contributes to the segregational stability of plasmids. In the complex XerD specifically exchanges the bottom DNA strands. The chain is Tyrosine recombinase XerD from Escherichia coli O157:H7.